The chain runs to 102 residues: Protein translation factor SUI1 homolog (102 aa).

It belongs to the SUI1 family.

This chain is Protein translation factor SUI1 homolog, found in Nitrosopumilus maritimus (strain SCM1).